The following is a 231-amino-acid chain: Large ribosomal subunit protein uL1 (231 aa).

The protein belongs to the universal ribosomal protein uL1 family. Part of the 50S ribosomal subunit.

Functionally, binds directly to 23S rRNA. The L1 stalk is quite mobile in the ribosome, and is involved in E site tRNA release. Protein L1 is also a translational repressor protein, it controls the translation of the L11 operon by binding to its mRNA. The polypeptide is Large ribosomal subunit protein uL1 (Mycoplasmopsis synoviae (strain 53) (Mycoplasma synoviae)).